A 138-amino-acid chain; its full sequence is MSGTLLAFDFGTKSIGVAVGQRITGTARPLPAIKAQDGTPDWNIIERLLKEWQPDEIIVGLPLNMDGTEQPLTARARKFANRIHGRFGVEVKLHDERLSTVEARSGLFEQGGYRALNKGKVDSASAVIILESYFEQGY.

The protein belongs to the YqgF nuclease family.

The protein resides in the cytoplasm. In terms of biological role, could be a nuclease involved in processing of the 5'-end of pre-16S rRNA. The protein is Putative pre-16S rRNA nuclease of Escherichia coli O45:K1 (strain S88 / ExPEC).